The primary structure comprises 376 residues: Integrator complex assembly factor WDR73 (376 aa).

3 WD repeats span residues 84–123 (FSEE…SDVI), 276–316 (ASKN…TESS), and 337–376 (TSPA…ITDR). The segment at 316-336 (SSPQPIFSHRGHEMSQEAKSS) is disordered.

Belongs to the WD repeat WDR73 family.

The protein resides in the cytoplasm. Its subcellular location is the cytoskeleton. It localises to the spindle. It is found in the spindle pole. The protein localises to the cleavage furrow. Its function is as follows. Component of a multiprotein complex required for the assembly of the RNA endonuclease module of the integrator complex. Associates with ints9 and ints11 in the cytoplasm, stabilizing the ints9-ints11 heterodimer and blocking the active site of ints11. Brat1 then joins the complex and plugs the active site of ints11, leading to wdr73 release and nuclear import of ints9 and ints11. The sequence is that of Integrator complex assembly factor WDR73 (wdr73) from Danio rerio (Zebrafish).